We begin with the raw amino-acid sequence, 481 residues long: Proline--tRNA ligase (481 aa).

Belongs to the class-II aminoacyl-tRNA synthetase family. ProS type 3 subfamily. In terms of assembly, homodimer.

Its subcellular location is the cytoplasm. The enzyme catalyses tRNA(Pro) + L-proline + ATP = L-prolyl-tRNA(Pro) + AMP + diphosphate. Functionally, catalyzes the attachment of proline to tRNA(Pro) in a two-step reaction: proline is first activated by ATP to form Pro-AMP and then transferred to the acceptor end of tRNA(Pro). The sequence is that of Proline--tRNA ligase from Chlorobium phaeovibrioides (strain DSM 265 / 1930) (Prosthecochloris vibrioformis (strain DSM 265)).